The sequence spans 272 residues: Transformer-2 sex-determining protein (272 aa).

Disordered regions lie at residues 21–102 (KHKC…DHPQ) and 182–272 (ITQR…QSRY). The span at 26 to 41 (HSSATSSPSSAASSES) shows a compositional bias: low complexity. Residues 87 to 102 (TSRDRQRMRQARDHPQ) show a composition bias toward basic and acidic residues. The RRM domain occupies 105 to 183 (RCIGVFGLNT…RRIRVDYSIT (79 aa)). Residues 184-204 (QRAHTPTPGVYMGRPSRPLGR) form a linker region. Residues 205-218 (RSRERDYSTRDTSR) show a composition bias toward basic and acidic residues. The span at 238-266 (RKYRSRHRYDRSRSRTRSYSRSRSPRKPV) shows a compositional bias: basic residues.

The protein belongs to the splicing factor SR family. Extensively phosphorylated on serine residues in the RS domain.

Functionally, required for female sex determination in somatic cells and for spermatogenesis in male germ cells. Positive regulator of female-specific splicing and/or polyadenylation of doublesex (dsx) pre-mRNA. Splicing requires an enhancer complex, dsxRE (dsx repeat element: which contains six copies of a 13-nucleotide repeat and a purine-rich enhancer (PRE)). DsxRE is formed through cooperative interactions between tra, tra2 and the sr proteins, and these interactions require both the repeat sequences and PRE. PRE is required for specific binding of tra2 to the dsxRE. Protein-RNA and protein-protein interactions are involved in tra-2 dependent activation and repression of alternative splicing. This is Transformer-2 sex-determining protein (tra2) from Drosophila virilis (Fruit fly).